The primary structure comprises 75 residues: Defensin-like protein 58 (75 aa).

Positions 1-23 (MNITKRYVVIFFLVMLTKSLSNS) are cleaved as a signal peptide. 4 cysteine pairs are disulfide-bonded: Cys-39–Cys-73, Cys-43–Cys-66, Cys-52–Cys-71, and Cys-56–Cys-72.

It belongs to the DEFL family.

It is found in the secreted. This Arabidopsis thaliana (Mouse-ear cress) protein is Defensin-like protein 58.